The primary structure comprises 212 residues: Stringent starvation protein A (212 aa).

Residues 9–87 enclose the GST N-terminal domain; the sequence is SVMTLFSGPT…YLDERFPHPP (79 aa). Residues 92–209 form the GST C-terminal domain; it reads YPVARGESRL…LTEAEREMRL (118 aa).

The protein belongs to the GST superfamily. HSP26 family.

Its function is as follows. Forms an equimolar complex with the RNA polymerase holoenzyme (RNAP) but not with the core enzyme. This chain is Stringent starvation protein A (sspA), found in Escherichia coli O157:H7.